Consider the following 210-residue polypeptide: Orotate phosphoribosyltransferase (210 aa).

5-phospho-alpha-D-ribose 1-diphosphate is bound by residues R94, K98, H100, and 120-128 (EDLISTGGS). S124 provides a ligand contact to orotate.

Belongs to the purine/pyrimidine phosphoribosyltransferase family. PyrE subfamily. In terms of assembly, homodimer. Mg(2+) serves as cofactor.

It carries out the reaction orotidine 5'-phosphate + diphosphate = orotate + 5-phospho-alpha-D-ribose 1-diphosphate. It functions in the pathway pyrimidine metabolism; UMP biosynthesis via de novo pathway; UMP from orotate: step 1/2. Its function is as follows. Catalyzes the transfer of a ribosyl phosphate group from 5-phosphoribose 1-diphosphate to orotate, leading to the formation of orotidine monophosphate (OMP). The protein is Orotate phosphoribosyltransferase of Bacillus cereus (strain B4264).